We begin with the raw amino-acid sequence, 351 residues long: UDP-glucose 4-epimerase 5 (351 aa).

Residues 13–15 (GYI), 34–38 (DNLDN), 64–65 (DL), Phe-86, and Lys-90 contribute to the NAD(+) site. 130–132 (SAT) is a binding site for substrate. The active-site Proton acceptor is Tyr-154. 2 residues coordinate NAD(+): Lys-158 and Tyr-182. Substrate is bound by residues 182–184 (YFN), 203–205 (NNL), 221–223 (TVF), Arg-236, and 298–301 (RPGD).

Belongs to the NAD(P)-dependent epimerase/dehydratase family. In terms of assembly, forms homodimers and heterodimers. Requires NAD(+) as cofactor. As to expression, widely expressed.

It catalyses the reaction UDP-alpha-D-glucose = UDP-alpha-D-galactose. Its pathway is carbohydrate metabolism; galactose metabolism. With respect to regulation, enhanced activity by NaCl. Inhibited by UDP. In terms of biological role, catalyzes the interconversion between UDP-glucose and UDP-galactose. The protein is UDP-glucose 4-epimerase 5 of Arabidopsis thaliana (Mouse-ear cress).